A 442-amino-acid chain; its full sequence is Syndecan-3 (442 aa).

Disordered stretches follow at residues 1-25 (MKPG…GPGA) and 55-85 (RPVD…SGYF). The first 44 residues, 1–44 (MKPGPPRRGTAQGQRVDTATHGPGARGLLLPPLLLLLLAGRAAG), serve as a signal peptide directing secretion. At 45 to 387 (AQRWRNENFE…SILERKEVLV (343 aa)) the chain is on the extracellular side. The segment covering 61–75 (GSGDDDSFPDDELDD) has biased composition (acidic residues). 4 O-linked (Xyl...) (glycosaminoglycan) serine glycosylation sites follow: serine 78, serine 80, serine 82, and serine 89. The O-linked (GalNAc) threonine; by GALNT13 glycan is linked to threonine 107. Disordered regions lie at residues 151–175 (EEPS…TGAP), 180–199 (APAT…PATA), 225–244 (ATTP…DTEA), 252–327 (TATS…TTQP), and 339–372 (AAAK…SSAA). The segment covering 157–175 (ATTISTTTSTTAATTTGAP) has biased composition (low complexity). O-linked (GalNAc) serine; by GALNT13 glycosylation occurs at serine 161. O-linked (GalNAc) threonine; by GALNT13 glycans are attached at residues threonine 162, threonine 163, threonine 170, and threonine 172. The segment covering 276-287 (TLPLGTTAPGPT) has biased composition (low complexity). Over residues 289-303 (VAQTPTPESLLTTTQ) the composition is skewed to polar residues. O-linked (Xyl...) (glycosaminoglycan) serine glycans are attached at residues serine 315 and serine 367. Residues 388–408 (AVIVGGVVGALFAAFLVTLLI) form a helical membrane-spanning segment. Tyrosine 409, tyrosine 419, tyrosine 431, and tyrosine 441 each carry phosphotyrosine. Residues 409-442 (YRMKKKDEGSYTLEEPKQASVTYQKPDKQEEFYA) lie on the Cytoplasmic side of the membrane. The disordered stretch occupies residues 419-442 (YTLEEPKQASVTYQKPDKQEEFYA). Over residues 433 to 442 (KPDKQEEFYA) the composition is skewed to basic and acidic residues.

It belongs to the syndecan proteoglycan family. Interacts with TIAM1. Interacts (via heparan sulfate chains) with PTN; this interaction mediates the neurite outgrowth-promoting signal from PTN to the cytoskeleton of growing neurites; this interaction mediates osteoblast recruitment. Interacts with MDK; this interaction induces SDC3 clustering; this interaction induces neuronal cell adhesion and neurite outgrowth. O-glycosylated within the Thr/Ser-rich region which could interact with lectin domains on other molecules. As to expression, high levels in neonatal brain, heart, and Schwann cells, barely detectable in neonatal or adult liver, or adult brain.

The protein localises to the cell membrane. Cell surface proteoglycan that may bear heparan sulfate. May have a role in the organization of cell shape by affecting the actin cytoskeleton, possibly by transferring signals from the cell surface in a sugar-dependent mechanism. This chain is Syndecan-3 (Sdc3), found in Rattus norvegicus (Rat).